The primary structure comprises 814 residues: Acyl-coenzyme A dehydrogenase (814 aa).

Catalysis depends on Glu-497, which acts as the Proton acceptor.

The protein belongs to the acyl-CoA dehydrogenase family. It depends on FAD as a cofactor.

The enzyme catalyses a medium-chain 2,3-saturated fatty acyl-CoA + oxidized [electron-transfer flavoprotein] + H(+) = a medium-chain (2E)-enoyl-CoA + reduced [electron-transfer flavoprotein]. The catalysed reaction is a long-chain 2,3-saturated fatty acyl-CoA + oxidized [electron-transfer flavoprotein] + H(+) = a long-chain (2E)-enoyl-CoA + reduced [electron-transfer flavoprotein]. The protein operates within lipid metabolism; fatty acid beta-oxidation. Its function is as follows. Catalyzes the dehydrogenation of acyl-coenzymes A (acyl-CoAs) to 2-enoyl-CoAs, the first step of the beta-oxidation cycle of fatty acid degradation. Is required for S.typhimurium to utilize medium- and long-chain fatty acids as sole carbon sources for growth. Is needed for bacterial survival during carbone-source starvation. The polypeptide is Acyl-coenzyme A dehydrogenase (fadE) (Salmonella typhimurium (strain LT2 / SGSC1412 / ATCC 700720)).